The chain runs to 147 residues: UPF0178 protein VS_2364 (147 aa).

It belongs to the UPF0178 family.

The protein is UPF0178 protein VS_2364 of Vibrio atlanticus (strain LGP32) (Vibrio splendidus (strain Mel32)).